The chain runs to 380 residues: Putative heat stress transcription factor B-4a (380 aa).

The hydrophobic repeat HR-A/B stretch occupies residues 216 to 245; the sequence is LLRGNAALVQELAHMRKLYSDIIYFVQNHV. Disordered regions lie at residues 268 to 296 and 314 to 380; these read PAGGKAPASEVRGASGRSATSSSSLTVAE and INEV…VSPP. A compositionally biased stretch (low complexity) spans 278–296; that stretch reads VRGASGRSATSSSSLTVAE. The short motif at 346-348 is the Nuclear localization signal element; that stretch reads RKR.

It belongs to the HSF family. Class B subfamily. Homotrimer. Post-translationally, exhibits temperature-dependent phosphorylation.

The protein resides in the nucleus. Its function is as follows. Transcriptional regulator that specifically binds DNA of heat shock promoter elements (HSE). The chain is Putative heat stress transcription factor B-4a (HSFB4A) from Oryza sativa subsp. japonica (Rice).